The sequence spans 114 residues: UPF0102 protein HPSH_02690 (114 aa).

Belongs to the UPF0102 family.

The polypeptide is UPF0102 protein HPSH_02690 (Helicobacter pylori (strain Shi470)).